Consider the following 184-residue polypeptide: MSDDLTQHYSQILSILGEDTQRGGLVDTPKRAAKAMQFLTDGYEKNLNDVVNGAIFEADTDEMVVIQNIEYYSLCEHHILPFIGQCHIAYLPQGKVLGLSKFARIVDMYARRLQIQEGLTKQIADAIQEVTGAAGVGVIMEGKHMCMMMRGVQKQNSSMVTSVMLGAMRKSDATRNEFLRLIGK.

Residues Cys75, His78, and Cys146 each coordinate Zn(2+).

It belongs to the GTP cyclohydrolase I family. As to quaternary structure, toroid-shaped homodecamer, composed of two pentamers of five dimers.

The enzyme catalyses GTP + H2O = 7,8-dihydroneopterin 3'-triphosphate + formate + H(+). Its pathway is cofactor biosynthesis; 7,8-dihydroneopterin triphosphate biosynthesis; 7,8-dihydroneopterin triphosphate from GTP: step 1/1. This is GTP cyclohydrolase 1 from Pseudoalteromonas atlantica (strain T6c / ATCC BAA-1087).